A 263-amino-acid polypeptide reads, in one-letter code: Expansin-like A3 (263 aa).

The signal sequence occupies residues 1–20 (MRSFLYLIVVIFLFSSSVNA). Positions 41-147 (SGACAYGPMA…QRVPCNYGKR (107 aa)) constitute an Expansin-like EG45 domain. Residues asparagine 99 and asparagine 102 are each glycosylated (N-linked (GlcNAc...) asparagine). One can recognise an Expansin-like CBD domain in the interval 161–243 (NYLAIKLLYQ…NWNSGRIYDA (83 aa)).

Belongs to the expansin family. Expansin-like A subfamily.

It localises to the secreted. The chain is Expansin-like A3 (EXLA3) from Arabidopsis thaliana (Mouse-ear cress).